We begin with the raw amino-acid sequence, 204 residues long: Large ribosomal subunit protein eL15B (204 aa).

The disordered stretch occupies residues 165-185 (TATGKKSRGINKGHKFNNTKA). The segment covering 169-185 (KKSRGINKGHKFNNTKA) has biased composition (basic residues).

The protein belongs to the eukaryotic ribosomal protein eL15 family. As to quaternary structure, component of the large ribosomal subunit (LSU). Mature yeast ribosomes consist of a small (40S) and a large (60S) subunit. The 40S small subunit contains 1 molecule of ribosomal RNA (18S rRNA) and 33 different proteins (encoded by 57 genes). The large 60S subunit contains 3 rRNA molecules (25S, 5.8S and 5S rRNA) and 46 different proteins (encoded by 81 genes).

It is found in the cytoplasm. Component of the ribosome, a large ribonucleoprotein complex responsible for the synthesis of proteins in the cell. The small ribosomal subunit (SSU) binds messenger RNAs (mRNAs) and translates the encoded message by selecting cognate aminoacyl-transfer RNA (tRNA) molecules. The large subunit (LSU) contains the ribosomal catalytic site termed the peptidyl transferase center (PTC), which catalyzes the formation of peptide bonds, thereby polymerizing the amino acids delivered by tRNAs into a polypeptide chain. The nascent polypeptides leave the ribosome through a tunnel in the LSU and interact with protein factors that function in enzymatic processing, targeting, and the membrane insertion of nascent chains at the exit of the ribosomal tunnel. The polypeptide is Large ribosomal subunit protein eL15B (Saccharomyces cerevisiae (strain ATCC 204508 / S288c) (Baker's yeast)).